Consider the following 425-residue polypeptide: 5-methylthioadenosine/S-adenosylhomocysteine deaminase (425 aa).

Zn(2+) is bound by residues His63 and His65. Substrate-binding residues include Glu92 and His184. Residue His211 participates in Zn(2+) binding. Residues Glu214 and Asp299 each contribute to the substrate site. Asp299 contacts Zn(2+).

The protein belongs to the metallo-dependent hydrolases superfamily. MTA/SAH deaminase family. Zn(2+) is required as a cofactor.

The enzyme catalyses S-adenosyl-L-homocysteine + H2O + H(+) = S-inosyl-L-homocysteine + NH4(+). The catalysed reaction is S-methyl-5'-thioadenosine + H2O + H(+) = S-methyl-5'-thioinosine + NH4(+). Functionally, catalyzes the deamination of 5-methylthioadenosine and S-adenosyl-L-homocysteine into 5-methylthioinosine and S-inosyl-L-homocysteine, respectively. Is also able to deaminate adenosine. The chain is 5-methylthioadenosine/S-adenosylhomocysteine deaminase from Pyrococcus abyssi (strain GE5 / Orsay).